The primary structure comprises 530 residues: Apolipoprotein N-acyltransferase (530 aa).

The next 6 membrane-spanning stretches (helical) occupy residues 19–39 (LIAG…PGLL), 65–85 (WLAG…AFLV), 96–116 (FAVT…ALLY), 128–148 (LTFA…LTGF), 169–189 (LVGA…PAVW), and 197–217 (AATG…AIAL). The region spanning 232–485 (VQADIKQDLK…SGVIDAQIPG (254 aa)) is the CN hydrolase domain. Glu-274 functions as the Proton acceptor in the catalytic mechanism. Lys-343 is a catalytic residue. The active-site Nucleophile is the Cys-396.

The protein belongs to the CN hydrolase family. Apolipoprotein N-acyltransferase subfamily.

It localises to the cell inner membrane. The catalysed reaction is N-terminal S-1,2-diacyl-sn-glyceryl-L-cysteinyl-[lipoprotein] + a glycerophospholipid = N-acyl-S-1,2-diacyl-sn-glyceryl-L-cysteinyl-[lipoprotein] + a 2-acyl-sn-glycero-3-phospholipid + H(+). The protein operates within protein modification; lipoprotein biosynthesis (N-acyl transfer). Its function is as follows. Catalyzes the phospholipid dependent N-acylation of the N-terminal cysteine of apolipoprotein, the last step in lipoprotein maturation. The sequence is that of Apolipoprotein N-acyltransferase from Caulobacter vibrioides (strain ATCC 19089 / CIP 103742 / CB 15) (Caulobacter crescentus).